The following is a 365-amino-acid chain: 3-dehydroquinate synthase (365 aa).

Residues 69-74 (DGEAHK), 103-107 (GVIGD), 127-128 (TT), Lys140, and Lys149 contribute to the NAD(+) site. Positions 182, 245, and 262 each coordinate Zn(2+).

It belongs to the sugar phosphate cyclases superfamily. Dehydroquinate synthase family. NAD(+) serves as cofactor. Requires Co(2+) as cofactor. It depends on Zn(2+) as a cofactor.

Its subcellular location is the cytoplasm. It carries out the reaction 7-phospho-2-dehydro-3-deoxy-D-arabino-heptonate = 3-dehydroquinate + phosphate. It functions in the pathway metabolic intermediate biosynthesis; chorismate biosynthesis; chorismate from D-erythrose 4-phosphate and phosphoenolpyruvate: step 2/7. Catalyzes the conversion of 3-deoxy-D-arabino-heptulosonate 7-phosphate (DAHP) to dehydroquinate (DHQ). This chain is 3-dehydroquinate synthase, found in Pseudomonas putida (strain ATCC 47054 / DSM 6125 / CFBP 8728 / NCIMB 11950 / KT2440).